An 85-amino-acid polypeptide reads, in one-letter code: MTDKIRSVQGKVVSDKMEKSFVVAIERKVKHPLYGKFIRRTTKLHVHDENNEAKVGDTVEIRECRPLSKTKSWTLVRVVEKAVIA.

The protein belongs to the universal ribosomal protein uS17 family. As to quaternary structure, part of the 30S ribosomal subunit.

One of the primary rRNA binding proteins, it binds specifically to the 5'-end of 16S ribosomal RNA. The chain is Small ribosomal subunit protein uS17 from Haemophilus influenzae (strain 86-028NP).